The primary structure comprises 358 residues: Alternative oxidase, mitochondrial (358 aa).

A helical transmembrane segment spans residues 152–172 (LIRMVFLESVAGVPGMVAGML). Residues Glu-159, Glu-198, and His-201 each contribute to the Fe cation site. Residues 217-237 (FMIIGAQGVFFNSMFLSYLIS) form a helical membrane-spanning segment. Residues Glu-249, Glu-250, Glu-306, and His-309 each contribute to the Fe cation site.

It belongs to the alternative oxidase family. Fe cation is required as a cofactor.

Its subcellular location is the mitochondrion inner membrane. Catalyzes cyanide-resistant oxygen consumption. May increase respiration when the cytochrome respiratory pathway is restricted, or in response to low temperatures. The chain is Alternative oxidase, mitochondrial from Blumeria graminis (Powdery mildew).